A 406-amino-acid polypeptide reads, in one-letter code: Sorting nexin-6 (406 aa).

N-acetylmethionine is present on Met-1. Met-2 carries the post-translational modification N-acetylmethionine; in Sorting nexin-6, N-terminally processed. The tract at residues 2 to 179 (MEGLDDGPDF…NQDLSVRGKN (178 aa)) is interaction with PIM1. One can recognise a PX domain in the interval 26-173 (LQSDAALQVD…HVFLEYNQDL (148 aa)). Residues 41 to 47 (SERDKVK), 100 to 106 (FDASREK), and 114 to 117 (EGSM) contribute to the a 1,2-diacyl-sn-glycero-3-phospho-(1D-myo-inositol-4,5-bisphosphate) site. A phosphoserine mark is found at Ser-116 and Ser-194. The interval 182–199 (EKLEDFFKNMVKSADGVI) is membrane-binding amphipathic helix. Residues 203–406 (VKDVDDFFEH…NCLAVLNGDT (204 aa)) enclose the BAR domain.

Belongs to the sorting nexin family. In terms of assembly, forms heterodimers with BAR domain-containing sorting nexins SNX1 and SNX2. The heterodimers are proposed to self-assemble into helical arrays on the membrane to stabilize and expand local membrane curvature underlying endosomal tubule formation. Thought to be a component of the originally described retromer complex (also called SNX-BAR retromer) which is a pentamer containing the heterotrimeric retromer cargo-selective complex (CSC), also described as vacuolar protein sorting subcomplex (VPS), and a heterodimeric membrane-deforming subcomplex formed between SNX1 or SNX2 and SNX5 or SNX6 (also called SNX-BAR subcomplex); the respective CSC and SNX-BAR subcomplexes associate with low affinity. Interacts with SNX1, SNX2, VPS26A, VPS29, VPS35, CDKN1B, TGFB receptors, BACE1, BRMS1, PIP5K1C isoform 3. Interacts with DCTN1; the association with DCTN1 is involved in movement of retromer-c ontaining vesicles toward the TGN. Interacts with CDKN1B and GIT1. Interacts with PIM1; translocating SNX6 to the nucleus. In terms of processing, in vitro phosphorylated by PIM1; not affecting PIM1-dependent nuclear translocation.

Its subcellular location is the early endosome. It is found in the early endosome membrane. The protein localises to the cytoplasmic vesicle. The protein resides in the cytoplasm. It localises to the nucleus. Its function is as follows. Involved in several stages of intracellular trafficking. Interacts with membranes phosphatidylinositol 3,4-bisphosphate and/or phosphatidylinositol 4,5-bisphosphate. Acts in part as component of the retromer membrane-deforming SNX-BAR subcomplex. The SNX-BAR retromer mediates retrograde transport of cargo proteins from endosomes to the trans-Golgi network (TGN) and is involved in endosome-to-plasma membrane transport for cargo protein recycling. The SNX-BAR subcomplex functions to deform the donor membrane into a tubular profile called endosome-to-TGN transport carrier (ETC). Does not have in vitro vesicle-to-membrane remodeling activity. Involved in retrograde endosome-to-TGN transport of lysosomal enzyme receptor IGF2R. May function as link between transport vesicles and dynactin. Negatively regulates retrograde transport of BACE1 from the cell surface to the trans-Golgi network. Involved in E-cadherin sorting and degradation; inhibits PIP5K1C isoform 3-mediated E-cadherin degradation. In association with GIT1 involved in EGFR degradation. Promotes lysosomal degradation of CDKN1B. May contribute to transcription regulation. In Homo sapiens (Human), this protein is Sorting nexin-6 (SNX6).